Reading from the N-terminus, the 345-residue chain is Putative membrane protein ORF59 (345 aa).

The next 4 helical transmembrane spans lie at Leu46 to Ile63, Ile101 to Leu118, Ile147 to Leu165, and Val265 to Ile286.

Its subcellular location is the membrane. In Ictalurid herpesvirus 1 (strain Auburn) (IcHV-1), this protein is Putative membrane protein ORF59 (ORF59).